The sequence spans 543 residues: CTP synthase (543 aa).

Positions 1–265 (MTRFVFITGG…DTEVLRHFGL (265 aa)) are amidoligase domain. Position 13 (S13) interacts with CTP. Residue S13 participates in UTP binding. 14–19 (SLGKGI) provides a ligand contact to ATP. Y54 contributes to the L-glutamine binding site. D71 is an ATP binding site. Mg(2+)-binding residues include D71 and E139. Residues 146 to 148 (DIE), 186 to 191 (KTKPTQ), and K222 contribute to the CTP site. UTP-binding positions include 186 to 191 (KTKPTQ) and K222. The Glutamine amidotransferase type-1 domain occupies 291–542 (RIAVVGKYTA…VGAAVKKMRL (252 aa)). G354 lines the L-glutamine pocket. C381 serves as the catalytic Nucleophile; for glutamine hydrolysis. L-glutamine is bound by residues 382–385 (FGMQ), E405, and R470. Active-site residues include H515 and E517.

Belongs to the CTP synthase family. Homotetramer.

It catalyses the reaction UTP + L-glutamine + ATP + H2O = CTP + L-glutamate + ADP + phosphate + 2 H(+). The catalysed reaction is L-glutamine + H2O = L-glutamate + NH4(+). It carries out the reaction UTP + NH4(+) + ATP = CTP + ADP + phosphate + 2 H(+). It functions in the pathway pyrimidine metabolism; CTP biosynthesis via de novo pathway; CTP from UDP: step 2/2. Its activity is regulated as follows. Allosterically activated by GTP, when glutamine is the substrate; GTP has no effect on the reaction when ammonia is the substrate. The allosteric effector GTP functions by stabilizing the protein conformation that binds the tetrahedral intermediate(s) formed during glutamine hydrolysis. Inhibited by the product CTP, via allosteric rather than competitive inhibition. Its function is as follows. Catalyzes the ATP-dependent amination of UTP to CTP with either L-glutamine or ammonia as the source of nitrogen. Regulates intracellular CTP levels through interactions with the four ribonucleotide triphosphates. This is CTP synthase from Gluconacetobacter diazotrophicus (strain ATCC 49037 / DSM 5601 / CCUG 37298 / CIP 103539 / LMG 7603 / PAl5).